The following is a 192-amino-acid chain: Fe/S biogenesis protein NfuA (192 aa).

Residues C149 and C152 each contribute to the [4Fe-4S] cluster site.

The protein belongs to the NfuA family. As to quaternary structure, homodimer. Requires [4Fe-4S] cluster as cofactor.

Involved in iron-sulfur cluster biogenesis. Binds a 4Fe-4S cluster, can transfer this cluster to apoproteins, and thereby intervenes in the maturation of Fe/S proteins. Could also act as a scaffold/chaperone for damaged Fe/S proteins. The chain is Fe/S biogenesis protein NfuA from Shewanella oneidensis (strain ATCC 700550 / JCM 31522 / CIP 106686 / LMG 19005 / NCIMB 14063 / MR-1).